The following is an 86-amino-acid chain: Large ribosomal subunit protein bL31 (86 aa).

The interval 65–86 (YGMGSADSATSKETKESKKSDK) is disordered. Over residues 74-86 (TSKETKESKKSDK) the composition is skewed to basic and acidic residues.

The protein belongs to the bacterial ribosomal protein bL31 family. Type A subfamily. As to quaternary structure, part of the 50S ribosomal subunit.

Functionally, binds the 23S rRNA. This chain is Large ribosomal subunit protein bL31, found in Prochlorococcus marinus subsp. pastoris (strain CCMP1986 / NIES-2087 / MED4).